Consider the following 95-residue polypeptide: Protein TusB (95 aa).

This sequence belongs to the DsrH/TusB family. Heterohexamer, formed by a dimer of trimers. The hexameric TusBCD complex contains 2 copies each of TusB, TusC and TusD. The TusBCD complex interacts with TusE.

It is found in the cytoplasm. Its function is as follows. Part of a sulfur-relay system required for 2-thiolation of 5-methylaminomethyl-2-thiouridine (mnm(5)s(2)U) at tRNA wobble positions. The polypeptide is Protein TusB (Cronobacter sakazakii (strain ATCC BAA-894) (Enterobacter sakazakii)).